A 510-amino-acid polypeptide reads, in one-letter code: NAD(P)H-quinone oxidoreductase subunit 2 B, chloroplastic (510 aa).

13 helical membrane-spanning segments follow: residues 24 to 44 (LLLF…GLIL), 57 to 77 (IPWL…ALLF), 99 to 119 (IFQF…VEYI), 124 to 144 (MAIT…MFLC), 150 to 170 (ITIF…SGYT), 183 to 203 (YLLM…WLYG), 229 to 249 (ISIA…PAPF), 295 to 315 (WHLL…LIAI), 323 to 343 (MLAY…IVGD), 354 to 374 (YMLF…LFGL), 395 to 415 (ALSS…AGFF), 418 to 438 (LHLF…IGLL), and 484 to 504 (MIVC…IIAI).

The protein belongs to the complex I subunit 2 family. As to quaternary structure, NDH is composed of at least 16 different subunits, 5 of which are encoded in the nucleus.

The protein localises to the plastid. It is found in the chloroplast thylakoid membrane. It catalyses the reaction a plastoquinone + NADH + (n+1) H(+)(in) = a plastoquinol + NAD(+) + n H(+)(out). The catalysed reaction is a plastoquinone + NADPH + (n+1) H(+)(in) = a plastoquinol + NADP(+) + n H(+)(out). Its function is as follows. NDH shuttles electrons from NAD(P)H:plastoquinone, via FMN and iron-sulfur (Fe-S) centers, to quinones in the photosynthetic chain and possibly in a chloroplast respiratory chain. The immediate electron acceptor for the enzyme in this species is believed to be plastoquinone. Couples the redox reaction to proton translocation, and thus conserves the redox energy in a proton gradient. The sequence is that of NAD(P)H-quinone oxidoreductase subunit 2 B, chloroplastic from Drimys granadensis.